The primary structure comprises 457 residues: Putative adhesion G protein-coupled receptor E4P (457 aa).

Positions 1–14 (MGSRFLLVLLSGAS) are cleaved as a signal peptide. 6 disulfide bridges follow: Cys-15-Cys-24, Cys-18-Cys-30, Cys-32-Cys-52, Cys-58-Cys-71, Cys-65-Cys-80, and Cys-82-Cys-103. The EGF-like 1 domain occupies 15-53 (CPPCPKYASCHNSTHCTCEDGFRARSGRTYFHDSSEKCE). Residues 16–191 (PPCPKYASCH…LAPKEDPVLT (176 aa)) lie on the Extracellular side of the membrane. Asn-26 carries N-linked (GlcNAc...) asparagine glycosylation. The EGF-like 2; calcium-binding domain maps to 54–104 (DINECETGLAKCKYKAYCRNKVGGYICSCLVKYTLFNFLAGIIDYDHPDCY). Residues Asn-106 and Asn-162 are each glycosylated (N-linked (GlcNAc...) asparagine). One can recognise a GAIN-B domain in the interval 134 to 186 (DKRTKHICVYWEGSEGGWSTEGCSHVHSNGSYTKCKCFHLSSFAVLVALAPKE). Intrachain disulfides connect Cys-141-Cys-168 and Cys-156-Cys-170. The tract at residues 141–186 (CVYWEGSEGGWSTEGCSHVHSNGSYTKCKCFHLSSFAVLVALAPKE) is GPS. Residues 192–212 (VITQVGLTISLLCLFLAILTF) form a helical membrane-spanning segment. The Cytoplasmic segment spans residues 213–223 (LLCRPIQNTST). The chain crosses the membrane as a helical span at residues 224-244 (SLHLELSLCLFLAHLLFLTGI). N-linked (GlcNAc...) asparagine glycosylation occurs at Asn-245. Residues 245-250 (NRTEPE) are Extracellular-facing. Residues 251 to 271 (VLCSIIAGLLHFLYLACFTWM) traverse the membrane as a helical segment. Topologically, residues 272–299 (LLEGLHLFLTVRNLKVANYTSTGRFKKR) are cytoplasmic. A helical membrane pass occupies residues 300-320 (FMYPVGYGIPAVIIAVSAIVG). The Extracellular segment spans residues 321–336 (PQNYGTFTCWLKLDKG). Residues 337–357 (FIWSFMGPVAVIILINLVFYF) form a helical membrane-spanning segment. Over 358-384 (QVLWILRSKLSSLNKEVSTIQDTRVMT) the chain is Cytoplasmic. Residues 385–405 (FKAISQLFILGCSWGLGFFMV) form a helical membrane-spanning segment. The Extracellular portion of the chain corresponds to 406-413 (EEVGKTIG). Residues 414 to 434 (SIIAYSFTIINTLQGVLLFVV) traverse the membrane as a helical segment. Residues 435-457 (HCLLNRQVRLIILSVISLVPKSN) are Cytoplasmic-facing.

Belongs to the G-protein coupled receptor 2 family. Adhesion G-protein coupled receptor (ADGR) subfamily. Forms a heterodimer, consisting of a large extracellular region (alpha subunit) non-covalently linked to a seven-transmembrane moiety (beta subunit). Post-translationally, glycosylated. In terms of processing, proteolytically cleaved into 2 subunits, an extracellular alpha subunit and a seven-transmembrane subunit.

It localises to the cell membrane. The protein localises to the secreted. May mediate the cellular interaction between myeloid cells and B-cells. This chain is Putative adhesion G protein-coupled receptor E4P, found in Homo sapiens (Human).